The sequence spans 223 residues: MEVKDILKTVDHTLLATTATWPEIQTILDDAMAYETASACIPASYVKKAAEYVSGKLAICTVIGFPNGYSTTAAKVFECEDAIKNGADEIDMVINLTDVKNGDFDTVEEEIRQIKAACQDHILKVIVETCQLTKEELIELCGVVTRSGADFIKTSTGFSTAGATFEDVEVMAKYVGEGVKIKAAGGISSLEDAETFIALGASRLGTSRIIKIVKNEATKTDSY.

Asp91 acts as the Proton donor/acceptor in catalysis. Lys153 (schiff-base intermediate with acetaldehyde) is an active-site residue. Catalysis depends on Lys182, which acts as the Proton donor/acceptor.

Belongs to the DeoC/FbaB aldolase family. DeoC type 1 subfamily.

The protein localises to the cytoplasm. The enzyme catalyses 2-deoxy-D-ribose 5-phosphate = D-glyceraldehyde 3-phosphate + acetaldehyde. It functions in the pathway carbohydrate degradation; 2-deoxy-D-ribose 1-phosphate degradation; D-glyceraldehyde 3-phosphate and acetaldehyde from 2-deoxy-alpha-D-ribose 1-phosphate: step 2/2. Its function is as follows. Catalyzes a reversible aldol reaction between acetaldehyde and D-glyceraldehyde 3-phosphate to generate 2-deoxy-D-ribose 5-phosphate. This Streptococcus pyogenes serotype M4 (strain MGAS10750) protein is Deoxyribose-phosphate aldolase.